The primary structure comprises 77 residues: MNNEKNVSFEFIGSTDEVDEIKLLPCAWAGNVCGEKRAYCCSDPGRYCPWQVVCYESSEICSQKCGKMRMNVTKNTI.

The N-terminal stretch at 1 to 22 (MNNEKNVSFEFIGSTDEVDEIK) is a signal peptide. Cystine bridges form between C26/C61, C33/C48, C40/C54, and C41/C65.

This chain is Pollen allergen Amb p 5a, found in Ambrosia psilostachya (Western ragweed).